Consider the following 359-residue polypeptide: TGACG-sequence-specific DNA-binding protein TGA-1A (359 aa).

The segment covering 44–54 (KRLDNETEDTS) has biased composition (basic and acidic residues). The tract at residues 44 to 72 (KRLDNETEDTSHGTVGTSNRYEPETSKPV) is disordered. The bZIP domain maps to 72–135 (VEKVLRRLAQ…GGVDASQLSY (64 aa)). The stretch at 73–125 (EKVLRRLAQNREAARKSRLRKKAYVQQLENSKLKLIQLEQELERARKQGMCVG) forms a coiled coil. Residues 74-94 (KVLRRLAQNREAARKSRLRKK) are basic motif. Residues 100–114 (LENSKLKLIQLEQEL) are leucine-zipper. Positions 143 to 354 (TAVFDMEYGH…RVLSSQWATR (212 aa)) constitute a DOG1 domain.

This sequence belongs to the bZIP family. As to quaternary structure, binds DNA as a dimer.

Its subcellular location is the nucleus. Transcriptional activator that binds specifically to the DNA sequence 5'-TGACG-3'. Recognizes ocs elements like the as-1 motif of the cauliflower mosaic virus 35S promoter. Binding to the as-1-like cis elements mediate auxin- and salicylic acid-inducible transcription. Could also bind to the Hex-motif (5'-TGACGTGG-3') another cis-acting element found in plant histone promoters. This Nicotiana tabacum (Common tobacco) protein is TGACG-sequence-specific DNA-binding protein TGA-1A (TGA1A).